The sequence spans 217 residues: Protein-L-isoaspartate O-methyltransferase (217 aa).

The active site involves S62.

The protein belongs to the methyltransferase superfamily. L-isoaspartyl/D-aspartyl protein methyltransferase family.

The protein localises to the cytoplasm. The catalysed reaction is [protein]-L-isoaspartate + S-adenosyl-L-methionine = [protein]-L-isoaspartate alpha-methyl ester + S-adenosyl-L-homocysteine. Its function is as follows. Catalyzes the methyl esterification of L-isoaspartyl residues in peptides and proteins that result from spontaneous decomposition of normal L-aspartyl and L-asparaginyl residues. It plays a role in the repair and/or degradation of damaged proteins. This chain is Protein-L-isoaspartate O-methyltransferase, found in Trichlorobacter lovleyi (strain ATCC BAA-1151 / DSM 17278 / SZ) (Geobacter lovleyi).